Reading from the N-terminus, the 402-residue chain is Uroporphyrinogen decarboxylase 1, chloroplastic (402 aa).

Residues methionine 1–arginine 50 constitute a chloroplast transit peptide. Substrate is bound by residues arginine 67–arginine 71, phenylalanine 86, serine 116, aspartate 117, tyrosine 193, serine 248, and histidine 363.

Belongs to the uroporphyrinogen decarboxylase family. Homodimer.

The protein localises to the plastid. Its subcellular location is the chloroplast. It catalyses the reaction uroporphyrinogen III + 4 H(+) = coproporphyrinogen III + 4 CO2. It participates in porphyrin-containing compound metabolism; protoporphyrin-IX biosynthesis; coproporphyrinogen-III from 5-aminolevulinate: step 4/4. Functionally, catalyzes the decarboxylation of four acetate groups of uroporphyrinogen-III to yield coproporphyrinogen-III. This is Uroporphyrinogen decarboxylase 1, chloroplastic from Oryza sativa subsp. japonica (Rice).